A 194-amino-acid chain; its full sequence is Histone H1.0-A (194 aa).

Disordered stretches follow at residues 1 to 29 (MTEN…YSDM) and 96 to 194 (ADEV…GRKK). Residues 22–95 (DHPKYSDMIL…GASGSFRLAK (74 aa)) enclose the H15 domain. Basic residues-rich tracts occupy residues 102-164 (PAKK…KTVR) and 172-194 (KAKK…GRKK).

This sequence belongs to the histone H1/H5 family.

The protein localises to the nucleus. It localises to the chromosome. Its function is as follows. Histones H1 are necessary for the condensation of nucleosome chains into higher-order structures. The histones H1.0 are found in cells that are in terminal stages of differentiation or that have low rates of cell division. The protein is Histone H1.0-A (h1-0-a) of Xenopus laevis (African clawed frog).